The primary structure comprises 258 residues: Snake venom serine protease 3 (258 aa).

The first 18 residues, 1–18, serve as a signal peptide directing secretion; sequence MVLIRVLANLLILQLSYA. Residues 19 to 24 constitute a propeptide that is removed on maturation; it reads QKSSEL. The Peptidase S1 domain occupies 25–249; that stretch reads VIGGDECNIN…YTDWIQSIIA (225 aa). 6 cysteine pairs are disulfide-bonded: C31–C163, C50–C66, C98–C256, C142–C210, C174–C189, and C200–C225. N44 carries an N-linked (GlcNAc...) asparagine glycan. Catalysis depends on H65, which acts as the Charge relay system. N103 is a glycosylation site (N-linked (GlcNAc...) asparagine). D110 acts as the Charge relay system in catalysis. Residues N117, N121, and N154 are each glycosylated (N-linked (GlcNAc...) asparagine). The active-site Charge relay system is S204. The N-linked (GlcNAc...) asparagine glycan is linked to N251.

Belongs to the peptidase S1 family. Snake venom subfamily. In terms of assembly, monomer. Expressed by the venom gland.

It localises to the secreted. Snake venom serine protease that may act in the hemostasis system of the prey. This chain is Snake venom serine protease 3 (TLG3), found in Craspedocephalus gramineus (Bamboo pit viper).